Consider the following 461-residue polypeptide: Cysteine--tRNA ligase (461 aa).

A Zn(2+)-binding site is contributed by Cys28. The short motif at 30-40 is the 'HIGH' region element; it reads ITIYDLCHIGH. 3 residues coordinate Zn(2+): Cys209, His234, and Glu238. A 'KMSKS' region motif is present at residues 266-270; the sequence is KMSKS. Residue Lys269 coordinates ATP.

This sequence belongs to the class-I aminoacyl-tRNA synthetase family. In terms of assembly, monomer. Zn(2+) is required as a cofactor.

The protein resides in the cytoplasm. It carries out the reaction tRNA(Cys) + L-cysteine + ATP = L-cysteinyl-tRNA(Cys) + AMP + diphosphate. This is Cysteine--tRNA ligase from Yersinia pestis bv. Antiqua (strain Antiqua).